The sequence spans 1059 residues: Carbamoyl phosphate synthase large chain (1059 aa).

The tract at residues 1 to 401 (MPKRKDIQKI…SLLKACRSLE (401 aa)) is carboxyphosphate synthetic domain. Residues R129, R169, G175, G176, R208, I210, E215, G241, I242, H243, Q284, and E298 each coordinate ATP. Residues 133–327 (KQLMEELGQP…IAKLAAKIAV (195 aa)) enclose the ATP-grasp 1 domain. Mg(2+) is bound by residues Q284, E298, and N300. Mn(2+) contacts are provided by Q284, E298, and N300. The oligomerization domain stretch occupies residues 402–546 (VCVDHNELPA…YSTYGFENES (145 aa)). Positions 547-929 (VKSSKESVLV…ALYKAFEASY (383 aa)) are carbamoyl phosphate synthetic domain. One can recognise an ATP-grasp 2 domain in the interval 671 to 861 (EQALKELDIP…MAQVATRLIL (191 aa)). Residues R707, S746, I748, E752, G777, V778, H779, S780, Q820, and E832 each coordinate ATP. The Mg(2+) site is built by Q820, E832, and N834. Q820, E832, and N834 together coordinate Mn(2+). The MGS-like domain occupies 930–1059 (LHLPNFGNIV…ESRSFTTEAI (130 aa)). The interval 930–1059 (LHLPNFGNIV…ESRSFTTEAI (130 aa)) is allosteric domain.

Belongs to the CarB family. In terms of assembly, composed of two chains; the small (or glutamine) chain promotes the hydrolysis of glutamine to ammonia, which is used by the large (or ammonia) chain to synthesize carbamoyl phosphate. Tetramer of heterodimers (alpha,beta)4. Mg(2+) is required as a cofactor. The cofactor is Mn(2+).

The catalysed reaction is hydrogencarbonate + L-glutamine + 2 ATP + H2O = carbamoyl phosphate + L-glutamate + 2 ADP + phosphate + 2 H(+). The enzyme catalyses hydrogencarbonate + NH4(+) + 2 ATP = carbamoyl phosphate + 2 ADP + phosphate + 2 H(+). The protein operates within amino-acid biosynthesis; L-arginine biosynthesis; carbamoyl phosphate from bicarbonate: step 1/1. It participates in pyrimidine metabolism; UMP biosynthesis via de novo pathway; (S)-dihydroorotate from bicarbonate: step 1/3. In terms of biological role, large subunit of the glutamine-dependent carbamoyl phosphate synthetase (CPSase). CPSase catalyzes the formation of carbamoyl phosphate from the ammonia moiety of glutamine, carbonate, and phosphate donated by ATP, constituting the first step of 2 biosynthetic pathways, one leading to arginine and/or urea and the other to pyrimidine nucleotides. The large subunit (synthetase) binds the substrates ammonia (free or transferred from glutamine from the small subunit), hydrogencarbonate and ATP and carries out an ATP-coupled ligase reaction, activating hydrogencarbonate by forming carboxy phosphate which reacts with ammonia to form carbamoyl phosphate. This chain is Carbamoyl phosphate synthase large chain, found in Streptococcus sanguinis (strain SK36).